The chain runs to 443 residues: Thymidine phosphorylase (443 aa).

Belongs to the thymidine/pyrimidine-nucleoside phosphorylase family. In terms of assembly, homodimer.

It carries out the reaction thymidine + phosphate = 2-deoxy-alpha-D-ribose 1-phosphate + thymine. It participates in pyrimidine metabolism; dTMP biosynthesis via salvage pathway; dTMP from thymine: step 1/2. Its function is as follows. The enzymes which catalyze the reversible phosphorolysis of pyrimidine nucleosides are involved in the degradation of these compounds and in their utilization as carbon and energy sources, or in the rescue of pyrimidine bases for nucleotide synthesis. The chain is Thymidine phosphorylase from Shewanella oneidensis (strain ATCC 700550 / JCM 31522 / CIP 106686 / LMG 19005 / NCIMB 14063 / MR-1).